Consider the following 358-residue polypeptide: Tyrosinase ustQ (358 aa).

Residue Asn-28 is glycosylated (N-linked (GlcNAc...) asparagine). A helical membrane pass occupies residues 37–57; the sequence is FVPVYAGLTIISLITVTVSLV. Asn-91 and Asn-109 each carry an N-linked (GlcNAc...) asparagine glycan. Positions 128 and 137 each coordinate Cu cation. 2 N-linked (GlcNAc...) asparagine glycosylation sites follow: Asn-172 and Asn-214. 3 residues coordinate Cu cation: His-266, His-270, and His-292. N-linked (GlcNAc...) asparagine glycans are attached at residues Asn-321 and Asn-325.

This sequence belongs to the tyrosinase family. Requires Cu(2+) as cofactor.

It is found in the membrane. It carries out the reaction 2 L-dopa + O2 = 2 L-dopaquinone + 2 H2O. The enzyme catalyses L-tyrosine + O2 = L-dopaquinone + H2O. Its pathway is mycotoxin biosynthesis. In terms of biological role, tyrosinase; part of the gene cluster that mediates the biosynthesis of the secondary metabolite ustiloxin B, an antimitotic tetrapeptide. First, ustA is processed by the subtilisin-like endoprotease Kex2 that is outside the ustiloxin B gene cluster, at the C-terminal side of Arg-Lys, after transfer to Golgi apparatus through the endoplasmic reticulum (ER). Cleavage by KEX2 generates 16 peptides YAIG-I to YAIG-XVI. To process the precursor peptide further, at least two peptidases are necessary to cleave the N-terminal and C-terminal sides of the Tyr-Ala-Ile-Gly core peptide which serves as backbone for the synthesis of ustiloxin B, through cyclization and modification of the tyrosine with a non-protein coding amino acid, norvaline. One of the two peptidases must be the serine peptidase ustP; and the other pepdidase is probably ustH. Macrocyclization of the core peptide derived from ustA requires the tyrosinase ustQ, as well as the homologous oxidases ustYa and ustYb, and leads to the production of the first cyclization product N-desmethylustiloxin F. For the formation of N-desmethylustiloxin F, three oxidation steps are required, hydroxylation at the benzylic position, hydroxylation at either the aromatic ring of Tyr or beta-position of Ile, and oxidative cyclization. UstQ may catalyze the oxidation of a phenol moiety, whereas the ustYa and ustYb are most likely responsible for the remaining two-step oxidations. N-desmethylustiloxin F is then methylated by ustM to yield ustiloxin F which in turn substrate of the cytochrome P450 monooxygenase ustC which catalyzes the formation of S-deoxyustiloxin H. The flavoprotein monooxygenases ustF1 and ustF2 then participate in the modification of the side chain of S-deoxyustiloxin H, leading to the synthesis of an oxime intermediate, via ustiloxin H. Finally, carboxylative dehydration performed by the cysteine desulfurase-like protein ustD yields ustiloxin B. The polypeptide is Tyrosinase ustQ (Aspergillus flavus (strain ATCC 200026 / FGSC A1120 / IAM 13836 / NRRL 3357 / JCM 12722 / SRRC 167)).